We begin with the raw amino-acid sequence, 169 residues long: Disulfide bond formation protein B 1 (169 aa).

Residues 1–14 (MSEETIRLGRERRY) lie on the Cytoplasmic side of the membrane. A helical transmembrane segment spans residues 15–31 (LVLLGIICLALIGGALY). Residues 32 to 49 (MQIVLGEAPCPLCILQRY) are Periplasmic-facing. A disulfide bond links cysteine 41 and cysteine 44. A helical membrane pass occupies residues 50 to 64 (ALLLIALFAFIGAAM). The Cytoplasmic segment spans residues 65–71 (RTRRSIT). Residues 72-89 (VFEVLVVICAIAGAGVAG) traverse the membrane as a helical segment. Over 90-144 (HHVYTQFYPAVSCGIDVLQPIVDDLPLAKIFPLGFQVDGFCSTPYPPILGLSLAQ) the chain is Periplasmic. A disulfide bridge links cysteine 102 with cysteine 130. The helical transmembrane segment at 145-163 (WALVAFVLVVILVPLLTSR) threads the bilayer. Residues 164-169 (NRKALR) are Cytoplasmic-facing.

Belongs to the DsbB family.

It is found in the cell inner membrane. Its function is as follows. Required for disulfide bond formation in some periplasmic proteins. Acts by oxidizing the DsbA protein. In Pseudomonas fluorescens (strain Pf0-1), this protein is Disulfide bond formation protein B 1.